Here is a 257-residue protein sequence, read N- to C-terminus: Large ribosomal subunit protein uL2 (257 aa).

Residues 207–257 (VDHPHGGGNHQHVGHPTTLKRSSPPGQKAGKVAARRTGLIRGGNKEGAADN) are disordered.

Belongs to the universal ribosomal protein uL2 family. In terms of assembly, component of the large ribosomal subunit.

The protein resides in the cytoplasm. In terms of biological role, component of the large ribosomal subunit. The ribosome is a large ribonucleoprotein complex responsible for the synthesis of proteins in the cell. The chain is Large ribosomal subunit protein uL2 (RPL8) from Entamoeba histolytica (strain ATCC 30459 / HM-1:IMSS / ABRM).